A 134-amino-acid polypeptide reads, in one-letter code: ATP synthase epsilon chain (134 aa).

It belongs to the ATPase epsilon chain family. F-type ATPases have 2 components, CF(1) - the catalytic core - and CF(0) - the membrane proton channel. CF(1) has five subunits: alpha(3), beta(3), gamma(1), delta(1), epsilon(1). CF(0) has three main subunits: a, b and c.

Its subcellular location is the cell inner membrane. Functionally, produces ATP from ADP in the presence of a proton gradient across the membrane. This chain is ATP synthase epsilon chain, found in Syntrophobacter fumaroxidans (strain DSM 10017 / MPOB).